The primary structure comprises 61 residues: Large ribosomal subunit protein bL32 (61 aa).

A compositionally biased stretch (basic residues) spans M1–R16. The disordered stretch occupies residues M1 to G61. Residues V28–L44 are compositionally biased toward basic and acidic residues.

Belongs to the bacterial ribosomal protein bL32 family.

This is Large ribosomal subunit protein bL32 from Bartonella bacilliformis (strain ATCC 35685 / KC583 / Herrer 020/F12,63).